A 585-amino-acid polypeptide reads, in one-letter code: MNAYVRDSESVYSESYPPENFISNEPEKSKDKDNFNGEEVISYVGEVETVPAKEENVFRRFINGFKIEKNQQDSAGQGLKRRLKSRHIQMIGIGGAIGTGVWVGSSKSLYRGGAASVLIDYCIVGTMVFCTVYALGELAVAFPTRGSFVTHATRFIDESWGFALSWNYVFSFIVTIPLELTTGTMMIKYWTNLNSGIWVTVFIVFLFFINIFGVKGYGEMEFIMSTIKVVAMCGFIILGIIIDCGGVPTDHRGYMGTHIFRENAFRHKFKGFCAVFTSAAFSFSGTEYVGVAAAETENPAKAFPVAVRQTLFRIAIFYILSLFIVSLLISGADPRLTSYHGVDASPFVLAIKDANIKALPSILNAIILISVISSANAQLYAGSRAIHSLGCNGFAPKCFTLVDREGRPLVALLILFLFMFLGYLVETGQYDTVFDWMLSISGLGTLFCWGSICLAHIRYRAAMKHQNRSLKEVGFVSPFNVYASYYAFILVCLVLAAEFYVSIFPVGGKPDASAFFENYLSAPVILVFFICHKLYYKTKRITLSNMDLETDFAYKTPVEEEEEEEKSAGSLSIKQRMKKLSDMMC.

Residues 1–34 are disordered; it reads MNAYVRDSESVYSESYPPENFISNEPEKSKDKDN. Residues 1–89 are Cytoplasmic-facing; that stretch reads MNAYVRDSES…KRRLKSRHIQ (89 aa). Low complexity predominate over residues 10–19; that stretch reads SVYSESYPPE. The span at 25–34 shows a compositional bias: basic and acidic residues; that stretch reads EPEKSKDKDN. A helical transmembrane segment spans residues 90–110; the sequence is MIGIGGAIGTGVWVGSSKSLY. The Extracellular portion of the chain corresponds to 111–121; the sequence is RGGAASVLIDY. A helical membrane pass occupies residues 122 to 142; that stretch reads CIVGTMVFCTVYALGELAVAF. Residues 143–159 lie on the Cytoplasmic side of the membrane; that stretch reads PTRGSFVTHATRFIDES. Residues 160 to 180 form a helical membrane-spanning segment; the sequence is WGFALSWNYVFSFIVTIPLEL. Residues 181–193 are Extracellular-facing; the sequence is TTGTMMIKYWTNL. Residues 194 to 214 form a helical membrane-spanning segment; it reads NSGIWVTVFIVFLFFINIFGV. Residues 215-221 are Cytoplasmic-facing; the sequence is KGYGEME. The chain crosses the membrane as a helical span at residues 222-242; sequence FIMSTIKVVAMCGFIILGIII. Over 243–271 the chain is Extracellular; sequence DCGGVPTDHRGYMGTHIFRENAFRHKFKG. A helical transmembrane segment spans residues 272–292; that stretch reads FCAVFTSAAFSFSGTEYVGVA. The Cytoplasmic portion of the chain corresponds to 293–313; it reads AAETENPAKAFPVAVRQTLFR. A helical membrane pass occupies residues 314 to 334; sequence IAIFYILSLFIVSLLISGADP. Over 335–361 the chain is Extracellular; the sequence is RLTSYHGVDASPFVLAIKDANIKALPS. The chain crosses the membrane as a helical span at residues 362-382; sequence ILNAIILISVISSANAQLYAG. Over 383-407 the chain is Cytoplasmic; the sequence is SRAIHSLGCNGFAPKCFTLVDREGR. A helical membrane pass occupies residues 408 to 428; sequence PLVALLILFLFMFLGYLVETG. Over 429–436 the chain is Extracellular; sequence QYDTVFDW. Residues 437-457 form a helical membrane-spanning segment; that stretch reads MLSISGLGTLFCWGSICLAHI. The Cytoplasmic segment spans residues 458-486; the sequence is RYRAAMKHQNRSLKEVGFVSPFNVYASYY. Residues 487–507 traverse the membrane as a helical segment; the sequence is AFILVCLVLAAEFYVSIFPVG. Residues 508–511 are Extracellular-facing; the sequence is GKPD. A helical transmembrane segment spans residues 512–532; it reads ASAFFENYLSAPVILVFFICH. Residues 533-585 lie on the Cytoplasmic side of the membrane; sequence KLYYKTKRITLSNMDLETDFAYKTPVEEEEEEEKSAGSLSIKQRMKKLSDMMC.

Belongs to the amino acid-polyamine-organocation (APC) superfamily.

It is found in the endoplasmic reticulum. The protein localises to the membrane. This is an uncharacterized protein from Schizosaccharomyces pombe (strain 972 / ATCC 24843) (Fission yeast).